The chain runs to 670 residues: Probable membrane-anchored ferredoxin csal_0991 (670 aa).

Transmembrane regions (helical) follow at residues 2–22 (LDIL…IGAV), 68–90 (VATA…LGLA), 94–113 (LGWL…LFVA), 135–155 (LMAF…VLPA), and 159–179 (GWLV…ELVF). 4Fe-4S ferredoxin-type domains lie at 241–271 (WNQL…PLNP) and 316–347 (GTAL…HVDA). Positions 250, 253, 256, 260, 328, 331, 334, and 338 each coordinate [4Fe-4S] cluster. Positions 648–670 (NTPPATPASHDTAASQATEEVLS) are disordered. The segment covering 659 to 670 (TAASQATEEVLS) has biased composition (polar residues).

Requires [4Fe-4S] cluster as cofactor.

The protein localises to the cell inner membrane. Its function is as follows. Participates in the electron transfer process during N,N-dimethylglycine (DMG) degradation to sarcosine. Probably transfers the electrons from N,N-dimethylglycine/sarcosine dehydrogenase (DMGDH) to the electron transfer flavoprotein (ETF) EtfA-EtfB. The chain is Probable membrane-anchored ferredoxin csal_0991 from Chromohalobacter salexigens (strain ATCC BAA-138 / DSM 3043 / CIP 106854 / NCIMB 13768 / 1H11).